A 312-amino-acid polypeptide reads, in one-letter code: Protoheme IX farnesyltransferase (312 aa).

A run of 9 helical transmembrane segments spans residues 31 to 51, 58 to 78, 107 to 127, 130 to 150, 157 to 177, 184 to 204, 229 to 249, 250 to 270, and 286 to 306; these read LLMKPSVMLLAVFTAITGLFI, PLLSSIAILCISTGAGAAGAI, TALTFGIILAFFSVLVMAICV, ISSILLLISISFYIIVYTMWL, NIVIGGAAGALPPVIGYSAVT, CLMLFLIIFLWTPAHFWTLSL, YSILAYTFLTVISASLPYFTD, IAGLLYLICSTISGIIFLCYA, and FKYSIIYLFNIFLYLIIEHCI.

Belongs to the UbiA prenyltransferase family. Protoheme IX farnesyltransferase subfamily.

The protein resides in the cell inner membrane. It carries out the reaction heme b + (2E,6E)-farnesyl diphosphate + H2O = Fe(II)-heme o + diphosphate. It participates in porphyrin-containing compound metabolism; heme O biosynthesis; heme O from protoheme: step 1/1. Converts heme B (protoheme IX) to heme O by substitution of the vinyl group on carbon 2 of heme B porphyrin ring with a hydroxyethyl farnesyl side group. The chain is Protoheme IX farnesyltransferase from Orientia tsutsugamushi (strain Ikeda) (Rickettsia tsutsugamushi).